The chain runs to 89 residues: Mapacalcine (89 aa).

Gln-89 is subject to Glutamine amide.

As to quaternary structure, homodimer. Contains disulfide bonds which may also be involved in dimerization.

In terms of biological role, blocks calcium currents via interaction with a yet unknown target protein. Has no effect on L-type, T-type, N-type or P/Q-type voltage-gated calcium channels (VGCC). Has no effect on voltage-gated potassium or chloride channels. Blocks non-L-type VGCC calcium currents in mouse duodenal myocytes (IC(50)=0.2 uM). Blocks calcium influx induced by hypoxia/reoxygenation in rat hepatocytes. The protein is Mapacalcine of Pione vastifica (Boring sponge).